A 297-amino-acid polypeptide reads, in one-letter code: Release factor glutamine methyltransferase (297 aa).

S-adenosyl-L-methionine contacts are provided by residues 134–138 (GTGSG), Asp-157, and Asn-200. Substrate is bound at residue 200–203 (NPPY).

It belongs to the protein N5-glutamine methyltransferase family. PrmC subfamily.

It catalyses the reaction L-glutaminyl-[peptide chain release factor] + S-adenosyl-L-methionine = N(5)-methyl-L-glutaminyl-[peptide chain release factor] + S-adenosyl-L-homocysteine + H(+). Methylates the class 1 translation termination release factors RF1/PrfA and RF2/PrfB on the glutamine residue of the universally conserved GGQ motif. The protein is Release factor glutamine methyltransferase of Bradyrhizobium diazoefficiens (strain JCM 10833 / BCRC 13528 / IAM 13628 / NBRC 14792 / USDA 110).